The sequence spans 254 residues: uncharacterized protein (254 aa).

A run of 5 helical transmembrane segments spans residues 33–53, 70–90, 92–112, 133–153, and 223–243; these read MLWVGVFIHLLYNKSLLLFFI, FNKLVYIGVFLFLLSFILFKS, FALSFLVFYLIGIFLYYLNFM, FIIFLNAILFVIPYCIFILLI, and FLVFICLSYILYIVSPFPLIF.

To M.jannaschii MJ0902.

It localises to the cell membrane. This is an uncharacterized protein from Methanocaldococcus jannaschii (strain ATCC 43067 / DSM 2661 / JAL-1 / JCM 10045 / NBRC 100440) (Methanococcus jannaschii).